A 154-amino-acid polypeptide reads, in one-letter code: Superoxide dismutase [Cu-Zn] (154 aa).

H47, H49, and H64 together coordinate Cu cation. C58 and C147 are oxidised to a cystine. Positions 64, 72, 81, and 84 each coordinate Zn(2+). H121 is a Cu cation binding site. A substrate-binding site is contributed by R144.

It belongs to the Cu-Zn superoxide dismutase family. Homodimer. The cofactor is Cu cation. Requires Zn(2+) as cofactor.

It is found in the cytoplasm. The protein resides in the mitochondrion. It localises to the cell membrane. The catalysed reaction is 2 superoxide + 2 H(+) = H2O2 + O2. Destroys radicals which are normally produced within the cells and which are toxic to biological systems. Destroys radicals produced by host defense mechanisms. In Cryptococcus neoformans var. grubii serotype A (strain H99 / ATCC 208821 / CBS 10515 / FGSC 9487) (Filobasidiella neoformans var. grubii), this protein is Superoxide dismutase [Cu-Zn].